A 200-amino-acid polypeptide reads, in one-letter code: Holliday junction resolvase RecU (200 aa).

The tract at residues 1 to 25 is disordered; it reads MTIRYPNGKRYNQASQPHKTPIKKH. Residues T85, D87, E100, and Q119 each contribute to the Mg(2+) site.

This sequence belongs to the RecU family. Mg(2+) is required as a cofactor.

The protein resides in the cytoplasm. It catalyses the reaction Endonucleolytic cleavage at a junction such as a reciprocal single-stranded crossover between two homologous DNA duplexes (Holliday junction).. Its function is as follows. Endonuclease that resolves Holliday junction intermediates in genetic recombination. Cleaves mobile four-strand junctions by introducing symmetrical nicks in paired strands. Promotes annealing of linear ssDNA with homologous dsDNA. Required for DNA repair, homologous recombination and chromosome segregation. The polypeptide is Holliday junction resolvase RecU (Bacillus thuringiensis (strain Al Hakam)).